Here is a 427-residue protein sequence, read N- to C-terminus: Glutamate-1-semialdehyde 2,1-aminomutase (427 aa).

An N6-(pyridoxal phosphate)lysine modification is found at Lys265.

This sequence belongs to the class-III pyridoxal-phosphate-dependent aminotransferase family. HemL subfamily. As to quaternary structure, homodimer. It depends on pyridoxal 5'-phosphate as a cofactor.

The protein resides in the cytoplasm. The enzyme catalyses (S)-4-amino-5-oxopentanoate = 5-aminolevulinate. It participates in porphyrin-containing compound metabolism; protoporphyrin-IX biosynthesis; 5-aminolevulinate from L-glutamyl-tRNA(Glu): step 2/2. This chain is Glutamate-1-semialdehyde 2,1-aminomutase, found in Mannheimia succiniciproducens (strain KCTC 0769BP / MBEL55E).